The sequence spans 1422 residues: DNA-directed RNA polymerase subunit beta (1422 aa).

The tract at residues 1392-1422 (QAAREAAERDLGGGPLGAPRGAVASGEKSSA) is disordered.

This sequence belongs to the RNA polymerase beta chain family. In terms of assembly, the RNAP catalytic core consists of 2 alpha, 1 beta, 1 beta' and 1 omega subunit. When a sigma factor is associated with the core the holoenzyme is formed, which can initiate transcription.

It carries out the reaction RNA(n) + a ribonucleoside 5'-triphosphate = RNA(n+1) + diphosphate. In terms of biological role, DNA-dependent RNA polymerase catalyzes the transcription of DNA into RNA using the four ribonucleoside triphosphates as substrates. This chain is DNA-directed RNA polymerase subunit beta, found in Anaeromyxobacter dehalogenans (strain 2CP-C).